The following is a 296-amino-acid chain: 4-hydroxybenzoate octaprenyltransferase (296 aa).

The next 8 membrane-spanning stretches (helical) occupy residues 28–48 (PIGI…AGNG), 52–72 (LANV…GCCI), 102–122 (ALAL…CTNS), 145–167 (TYYP…FTAA), 174–196 (SAWL…YAMV), 219–239 (NIIL…GSRF), 241–261 (LGGW…WEYW), and 275–295 (FLHN…DYAF).

The protein belongs to the UbiA prenyltransferase family. Mg(2+) is required as a cofactor.

It localises to the cell inner membrane. The enzyme catalyses all-trans-octaprenyl diphosphate + 4-hydroxybenzoate = 4-hydroxy-3-(all-trans-octaprenyl)benzoate + diphosphate. It functions in the pathway cofactor biosynthesis; ubiquinone biosynthesis. Its function is as follows. Catalyzes the prenylation of para-hydroxybenzoate (PHB) with an all-trans polyprenyl group. Mediates the second step in the final reaction sequence of ubiquinone-8 (UQ-8) biosynthesis, which is the condensation of the polyisoprenoid side chain with PHB, generating the first membrane-bound Q intermediate 3-octaprenyl-4-hydroxybenzoate. In Pseudomonas putida (strain GB-1), this protein is 4-hydroxybenzoate octaprenyltransferase.